The following is a 340-amino-acid chain: Protein AC11 (340 aa).

Functionally, plays an essential role in nucleocapsid egress from the host nucleus to form the budded virion (BV). Does not participate in nucleocapsid formation. This is Protein AC11 from Autographa californica nuclear polyhedrosis virus (AcMNPV).